The primary structure comprises 154 residues: Egg-lysin (154 aa).

An N-terminal signal peptide occupies residues 1–18 (MKLLVLCIFAMMATLAMS).

As to quaternary structure, monomer. Homodimer. Molecules associate into dimers and then rapidly dissociate again. Interacts (as a monomer) with the egg vitelline layer protein VERL (via VERL repeats); each VERL chain can bind multiple copies of lysin. As to expression, sperm (at protein level).

The protein localises to the cytoplasmic vesicle. It localises to the secretory vesicle. The protein resides in the acrosome lumen. Its function is as follows. Creates a 3 um hole in the egg vitelline layer through which the sperm passes. Does not have enzyme activity. Species-specific interaction between the sperm protein lysin and the egg protein VERL exposes a basic surface on lysin that may dissociate the egg vitelline layer via electrostatic repulsion. Plays a role in ensuring species-specific fertilization. This is Egg-lysin from Haliotis rufescens (California red abalone).